Here is a 477-residue protein sequence, read N- to C-terminus: Glycogen synthase (477 aa).

An ADP-alpha-D-glucose-binding site is contributed by Lys15.

The protein belongs to the glycosyltransferase 1 family. Bacterial/plant glycogen synthase subfamily.

The enzyme catalyses [(1-&gt;4)-alpha-D-glucosyl](n) + ADP-alpha-D-glucose = [(1-&gt;4)-alpha-D-glucosyl](n+1) + ADP + H(+). The protein operates within glycan biosynthesis; glycogen biosynthesis. Its function is as follows. Synthesizes alpha-1,4-glucan chains using ADP-glucose. The protein is Glycogen synthase of Halorhodospira halophila (strain DSM 244 / SL1) (Ectothiorhodospira halophila (strain DSM 244 / SL1)).